A 116-amino-acid polypeptide reads, in one-letter code: Large ribosomal subunit protein bL19 (116 aa).

Belongs to the bacterial ribosomal protein bL19 family.

This protein is located at the 30S-50S ribosomal subunit interface and may play a role in the structure and function of the aminoacyl-tRNA binding site. The polypeptide is Large ribosomal subunit protein bL19 (Shewanella loihica (strain ATCC BAA-1088 / PV-4)).